A 118-amino-acid polypeptide reads, in one-letter code: Putative pterin-4-alpha-carbinolamine dehydratase (118 aa).

This sequence belongs to the pterin-4-alpha-carbinolamine dehydratase family.

The catalysed reaction is (4aS,6R)-4a-hydroxy-L-erythro-5,6,7,8-tetrahydrobiopterin = (6R)-L-erythro-6,7-dihydrobiopterin + H2O. The protein is Putative pterin-4-alpha-carbinolamine dehydratase of Pseudomonas fluorescens (strain SBW25).